The chain runs to 867 residues: Leucine--tRNA ligase (867 aa).

A 'HIGH' region motif is present at residues 42 to 52; it reads PYPSGNLHMGH. Positions 625 to 629 match the 'KMSKS' region motif; the sequence is KMSKS. Lys628 provides a ligand contact to ATP.

This sequence belongs to the class-I aminoacyl-tRNA synthetase family.

It localises to the cytoplasm. It carries out the reaction tRNA(Leu) + L-leucine + ATP = L-leucyl-tRNA(Leu) + AMP + diphosphate. The protein is Leucine--tRNA ligase of Blochmanniella floridana.